The sequence spans 450 residues: Tripartite motif-containing protein 77 (450 aa).

The segment at 15–56 (CSICTDYLTDPVTICCGHRFCSPCLCLLWEDTLTPNCCPVCR) adopts an RING-type zinc-finger fold. The B box-type zinc-finger motif lies at 88-131 (SAMLICRRHQEIKNLICETDRSLLCFLCSQSPRHATHKHYMTRE). 4 residues coordinate Zn(2+): cysteine 93, histidine 96, cysteine 115, and histidine 121. The B30.2/SPRY domain maps to 269–450 (QLSAWTITGV…LRPFICHGSK (182 aa)).

The protein belongs to the TRIM/RBCC family.

This is Tripartite motif-containing protein 77 (TRIM77) from Homo sapiens (Human).